A 311-amino-acid chain; its full sequence is Pyrimidine-specific ribonucleoside hydrolase RihA (311 aa).

The active site involves His-240.

The protein belongs to the IUNH family. RihA subfamily.

Its function is as follows. Hydrolyzes cytidine or uridine to ribose and cytosine or uracil, respectively. The chain is Pyrimidine-specific ribonucleoside hydrolase RihA from Salmonella dublin (strain CT_02021853).